Here is a 294-residue protein sequence, read N- to C-terminus: 2,4-diacetylphloroglucinol hydrolase (294 aa).

Positions 129, 160, 270, and 274 each coordinate Zn(2+).

This sequence belongs to the DAPG/phloretin hydrolase family. In terms of assembly, homodimer. Requires Zn(2+) as cofactor.

The catalysed reaction is 2,4-diacetylphloroglucinol + H2O = 2-acetylphloroglucinol + acetate. With respect to regulation, specifically and significantly activated by CoCl(2). Competitively inhibited by MAPG, but not by 2-hydroxy- and 4-hydroxyacetophenone. In terms of biological role, hydrolase that specifically degrades the potent antimicrobial compound 2,4-diacetylphloroglucinol (DAPG) to equimolar amounts of mildly toxic monoacetylphloroglucinol (MAPG) and acetate. The protein is 2,4-diacetylphloroglucinol hydrolase of Pseudomonas sp.